The primary structure comprises 357 residues: Peptide chain release factor 1 (357 aa).

Gln-232 is modified (N5-methylglutamine). Residues 281 to 305 are compositionally biased toward basic and acidic residues; sequence DRQHNEMAADRRSQVGSGDRSERIR. Residues 281-309 are disordered; the sequence is DRQHNEMAADRRSQVGSGDRSERIRTYNF.

Belongs to the prokaryotic/mitochondrial release factor family. Post-translationally, methylated by PrmC. Methylation increases the termination efficiency of RF1.

The protein localises to the cytoplasm. In terms of biological role, peptide chain release factor 1 directs the termination of translation in response to the peptide chain termination codons UAG and UAA. In Nitratidesulfovibrio vulgaris (strain DSM 19637 / Miyazaki F) (Desulfovibrio vulgaris), this protein is Peptide chain release factor 1.